A 480-amino-acid polypeptide reads, in one-letter code: LETM1 domain-containing protein LETM2, mitochondrial (480 aa).

A mitochondrion-targeting transit peptide spans 1-25; sequence MAFYSYNSFLAIFWTRLPGHSVYPS. At 26–175 the chain is on the mitochondrial intermembrane side; it reads CSHFPSLAFL…LLRTCADVFR (150 aa). Residues 88 to 118 form a disordered region; sequence GKPQLEQTGKPKAASPQPTKEAKTETTEEKR. A compositionally biased stretch (basic and acidic residues) spans 107 to 118; that stretch reads KEAKTETTEEKR. A helical transmembrane segment spans residues 176-196; sequence LVPFMVFIIVPFMEFLIPVFL. Topologically, residues 197–480 are mitochondrial matrix; sequence KLFPDMLPST…QNSKADSKGA (284 aa). Positions 219–436 constitute a Letm1 RBD domain; that stretch reads KTMAAKLEIA…SAPQLKGTKD (218 aa). A disordered region spans residues 398-444; it reads ELPPNIETPKPNLGIPTPPPPESKENLTDSAPQLKGTKDEEFIQLPP.

The protein localises to the mitochondrion inner membrane. The polypeptide is LETM1 domain-containing protein LETM2, mitochondrial (Letm2) (Mus musculus (Mouse)).